A 131-amino-acid polypeptide reads, in one-letter code: Glycine cleavage system H protein (131 aa).

The Lipoyl-binding domain maps to 24-106 (RVTVGISDHA…YGEGWMFVVE (83 aa)). Position 65 is an N6-lipoyllysine (Lys-65).

The protein belongs to the GcvH family. In terms of assembly, the glycine cleavage system is composed of four proteins: P, T, L and H. The cofactor is (R)-lipoate.

Functionally, the glycine cleavage system catalyzes the degradation of glycine. The H protein shuttles the methylamine group of glycine from the P protein to the T protein. In Stenotrophomonas maltophilia (strain K279a), this protein is Glycine cleavage system H protein.